A 305-amino-acid polypeptide reads, in one-letter code: Protein EXORDIUM-like 2 (305 aa).

Positions 1 to 23 (MASNYRFAIFLTLFFATAGFSAA) are cleaved as a signal peptide. An N-linked (GlcNAc...) asparagine glycan is attached at Asn44.

It belongs to the EXORDIUM family.

The protein resides in the secreted. It is found in the extracellular space. The protein localises to the apoplast. May play a role in a brassinosteroid-dependent regulation of growth and development. The polypeptide is Protein EXORDIUM-like 2 (EXL2) (Arabidopsis thaliana (Mouse-ear cress)).